The following is a 513-amino-acid chain: Bifunctional purine biosynthesis protein PurH (513 aa).

Residues 1–144 enclose the MGS-like domain; sequence MSKRALISVS…KNHERVGIVV (144 aa).

Belongs to the PurH family.

It catalyses the reaction (6R)-10-formyltetrahydrofolate + 5-amino-1-(5-phospho-beta-D-ribosyl)imidazole-4-carboxamide = 5-formamido-1-(5-phospho-D-ribosyl)imidazole-4-carboxamide + (6S)-5,6,7,8-tetrahydrofolate. It carries out the reaction IMP + H2O = 5-formamido-1-(5-phospho-D-ribosyl)imidazole-4-carboxamide. It functions in the pathway purine metabolism; IMP biosynthesis via de novo pathway; 5-formamido-1-(5-phospho-D-ribosyl)imidazole-4-carboxamide from 5-amino-1-(5-phospho-D-ribosyl)imidazole-4-carboxamide (10-formyl THF route): step 1/1. It participates in purine metabolism; IMP biosynthesis via de novo pathway; IMP from 5-formamido-1-(5-phospho-D-ribosyl)imidazole-4-carboxamide: step 1/1. The polypeptide is Bifunctional purine biosynthesis protein PurH (Moorella thermoacetica (strain ATCC 39073 / JCM 9320)).